The sequence spans 503 residues: Inosine-5'-monophosphate dehydrogenase 1 (503 aa).

N-acetylserine is present on Ser-2. Residues 167 to 225 form the CBS domain; sequence MKSCDSSDYCVPWEIDFEKLEFVLEDKQKGFVVLERDGETVNVVTKDDIQRVKGYPKSG. Residues 265–267 and 315–317 contribute to the NAD(+) site; these read DSS and GMG. Positions 317 and 319 each coordinate K(+). Residue Ser-320 coordinates IMP. Cys-322 lines the K(+) pocket. Cys-322 acts as the Thioimidate intermediate in catalysis. IMP is bound by residues 355–357, 378–379, and 402–406; these read DGG, GS, and YRGMG. The Proton acceptor role is filled by Arg-418. Gln-430 provides a ligand contact to IMP. Residues Glu-489, Gly-490, and Gly-491 each contribute to the K(+) site.

It belongs to the IMPDH/GMPR family. Homotetramer. It depends on K(+) as a cofactor.

It localises to the cytoplasm. It catalyses the reaction IMP + NAD(+) + H2O = XMP + NADH + H(+). Its pathway is purine metabolism; XMP biosynthesis via de novo pathway; XMP from IMP: step 1/1. Mycophenolic acid (MPA) is a non-competitive inhibitor that prevents formation of the closed enzyme conformation by binding to the same site as the amobile flap. In contrast, mizoribine monophosphate (MZP) is a competitive inhibitor that induces the closed conformation. MPA is a potent inhibitor of mammalian IMPDHs but a poor inhibitor of the bacterial enzymes. MZP is a more potent inhibitor of bacterial IMPDH. In terms of biological role, catalyzes the conversion of inosine 5'-phosphate (IMP) to xanthosine 5'-phosphate (XMP), the first committed and rate-limiting step in the de novo synthesis of guanine nucleotides, and therefore plays an important role in the regulation of cell growth. In Arabidopsis thaliana (Mouse-ear cress), this protein is Inosine-5'-monophosphate dehydrogenase 1.